A 388-amino-acid polypeptide reads, in one-letter code: Putative membrane protein MJ1562 (388 aa).

The next 6 helical transmembrane spans lie at 22-42, 219-239, 246-266, 273-293, 320-340, and 351-371; these read FLML…ATNV, SQSF…IIYF, IMPL…MGLL, ATAG…IHLM, AVMA…LAPL, and ALGI…LIVI.

Belongs to the resistance-nodulation-cell division (RND) (TC 2.A.6) family. MmpL subfamily.

Its subcellular location is the cell membrane. The sequence is that of Putative membrane protein MJ1562 from Methanocaldococcus jannaschii (strain ATCC 43067 / DSM 2661 / JAL-1 / JCM 10045 / NBRC 100440) (Methanococcus jannaschii).